We begin with the raw amino-acid sequence, 496 residues long: Nitric oxide synthase, inducible (496 aa).

Residues C6, E32, and Q36 each contribute to the FMN site. Positions 101-341 constitute an FAD-binding FR-type domain; the sequence is KNLFTMRLRS…VRSVSGFQLP (241 aa). Position 121 (R121) interacts with NADP(+). H143, R277, Y279, S280, T295, and A297 together coordinate FAD. Position 300 (T300) interacts with NADP(+). FAD-binding residues include Y301, V314, C315, and S316. 8 residues coordinate NADP(+): T355, R388, S417, R418, K424, Y426, Q428, and D461.

This sequence belongs to the NOS family. As to quaternary structure, homodimer. Interacts with NHERF1. Interacts with GAPDH; induced by oxidatively-modified low-densitity lipoprotein (LDL(ox)). Interacts with S100A8 and S100A9 to form the iNOS-S100A8/9 transnitrosylase complex. Interacts with SPSB1, SPSB2 and SPSB4. Interacts with ELOC and CUL5 in the presence of SPSB1 or SPSB2 or SPSB4. Forms a complex with ASL, ASS1 and HSP90AA1; the complex regulates cell-autonomous L-arginine synthesis and citrulline recycling while channeling extracellular L-arginine to nitric oxide synthesis pathway. Heme b serves as cofactor. The cofactor is FAD. It depends on FMN as a cofactor. (6R)-L-erythro-5,6,7,8-tetrahydrobiopterin is required as a cofactor. In terms of processing, polyubiquitinated; mediated by SPSB1, SPSB2 and SPSB4, leading to proteasomal degradation.

Its subcellular location is the cytoplasm. It localises to the cytosol. The enzyme catalyses 2 L-arginine + 3 NADPH + 4 O2 + H(+) = 2 L-citrulline + 2 nitric oxide + 3 NADP(+) + 4 H2O. With respect to regulation, not stimulated by calcium/calmodulin. In terms of biological role, produces nitric oxide (NO) which is a messenger molecule with diverse functions throughout the body. In macrophages, NO mediates tumoricidal and bactericidal actions. Also has nitrosylase activity and mediates cysteine S-nitrosylation of cytoplasmic target proteins such PTGS2/COX2. As component of the iNOS-S100A8/9 transnitrosylase complex involved in the selective inflammatory stimulus-dependent S-nitrosylation of GAPDH implicated in regulation of the GAIT complex activity and probably multiple targets including ANXA5, EZR, MSN and VIM. Involved in inflammation, enhances the synthesis of pro-inflammatory mediators such as IL6 and IL8. The chain is Nitric oxide synthase, inducible (NOS2) from Oryctolagus cuniculus (Rabbit).